The following is a 369-amino-acid chain: Protein phosphatase 1 regulatory inhibitor subunit PPP1R8 homolog (369 aa).

Over residues 1–11 (MYGRSGLDRFK) the composition is skewed to basic and acidic residues. The segment at 1-26 (MYGRSGLDRFKKSQTSEPFSVSANPP) is disordered. Over residues 13–23 (SQTSEPFSVSA) the composition is skewed to polar residues. The FHA domain occupies 87–138 (HIFGRQHQTCDFVLDHQSVSRQHAAVVPHKNGSIFVIDLGSAHGTFVANERL). Positions 345–369 (VSQPAAETECGGVGEEDDNDDLFGD) are disordered. Positions 358-369 (GEEDDNDDLFGD) are enriched in acidic residues.

In terms of assembly, interacts with human protein phosphatase PPP1C.

Its function is as follows. Inhibitor of protein-phosphatase 1 (PP1). Binds to and inhibits PP1 activity. This chain is Protein phosphatase 1 regulatory inhibitor subunit PPP1R8 homolog, found in Arabidopsis thaliana (Mouse-ear cress).